The primary structure comprises 136 residues: Nucleoside diphosphate kinase (136 aa).

ATP is bound by residues lysine 9, phenylalanine 57, arginine 85, threonine 91, arginine 102, and asparagine 112. Residue histidine 115 is the Pros-phosphohistidine intermediate of the active site.

Belongs to the NDK family. In terms of assembly, homotetramer. It depends on Mg(2+) as a cofactor.

The protein localises to the cytoplasm. It catalyses the reaction a 2'-deoxyribonucleoside 5'-diphosphate + ATP = a 2'-deoxyribonucleoside 5'-triphosphate + ADP. The catalysed reaction is a ribonucleoside 5'-diphosphate + ATP = a ribonucleoside 5'-triphosphate + ADP. Major role in the synthesis of nucleoside triphosphates other than ATP. The ATP gamma phosphate is transferred to the NDP beta phosphate via a ping-pong mechanism, using a phosphorylated active-site intermediate. The protein is Nucleoside diphosphate kinase of Acetivibrio thermocellus (strain ATCC 27405 / DSM 1237 / JCM 9322 / NBRC 103400 / NCIMB 10682 / NRRL B-4536 / VPI 7372) (Clostridium thermocellum).